A 290-amino-acid chain; its full sequence is Bifunctional protein FolD (290 aa).

NADP(+) is bound by residues G174–S176, I199, and I240.

The protein belongs to the tetrahydrofolate dehydrogenase/cyclohydrolase family. In terms of assembly, homodimer.

The catalysed reaction is (6R)-5,10-methylene-5,6,7,8-tetrahydrofolate + NADP(+) = (6R)-5,10-methenyltetrahydrofolate + NADPH. It catalyses the reaction (6R)-5,10-methenyltetrahydrofolate + H2O = (6R)-10-formyltetrahydrofolate + H(+). It participates in one-carbon metabolism; tetrahydrofolate interconversion. Its function is as follows. Catalyzes the oxidation of 5,10-methylenetetrahydrofolate to 5,10-methenyltetrahydrofolate and then the hydrolysis of 5,10-methenyltetrahydrofolate to 10-formyltetrahydrofolate. The polypeptide is Bifunctional protein FolD (Methanosarcina acetivorans (strain ATCC 35395 / DSM 2834 / JCM 12185 / C2A)).